A 472-amino-acid polypeptide reads, in one-letter code: Chromosomal replication initiator protein DnaA (472 aa).

A domain I, interacts with DnaA modulators region spans residues 1–73 (MSNMEHDRWS…LTCWQAEMPE (73 aa)). A domain II region spans residues 73-128 (EVCRIDLTVRSPMRAAVTKEAPAPAEHRRDEHRPAADARSHAAAPAPSNHDALGGS). The segment at 89 to 127 (VTKEAPAPAEHRRDEHRPAADARSHAAAPAPSNHDALGG) is disordered. Over residues 97–112 (AEHRRDEHRPAADARS) the composition is skewed to basic and acidic residues. The segment covering 113–124 (HAAAPAPSNHDA) has biased composition (low complexity). Residues 129–351 (PLDPRLTFAS…GAINRLLAHS (223 aa)) form a domain III, AAA+ region region. Glycine 176, glycine 178, lysine 179, and threonine 180 together coordinate ATP. The tract at residues 352-472 (KLNAQPVTLE…VESLKRQLQE (121 aa)) is domain IV, binds dsDNA.

This sequence belongs to the DnaA family. In terms of assembly, oligomerizes as a right-handed, spiral filament on DNA at oriC.

The protein localises to the cytoplasm. Plays an essential role in the initiation and regulation of chromosomal replication. ATP-DnaA binds to the origin of replication (oriC) to initiate formation of the DNA replication initiation complex once per cell cycle. Binds the DnaA box (a 9 base pair repeat at the origin) and separates the double-stranded (ds)DNA. Forms a right-handed helical filament on oriC DNA; dsDNA binds to the exterior of the filament while single-stranded (ss)DNA is stabiized in the filament's interior. The ATP-DnaA-oriC complex binds and stabilizes one strand of the AT-rich DNA unwinding element (DUE), permitting loading of DNA polymerase. After initiation quickly degrades to an ADP-DnaA complex that is not apt for DNA replication. Binds acidic phospholipids. This is Chromosomal replication initiator protein DnaA from Rhodopseudomonas palustris (strain BisB5).